A 157-amino-acid polypeptide reads, in one-letter code: Neutrophil recruitment protein (157 aa).

A signal peptide spans 1–19 (MCSIWLTFFLSFLILNTKA).

The protein belongs to the PBP/GOBP family. Interacts with mouse TLR1; the interaction promotes activation of canonical NF-kappa-B signaling in host macrophages. Interacts with human TLR1. Interacts with mouse TLR4; the interaction promotes activation of canonical NF-kappa-B signaling in host macrophages. Interacts with human TLR4. Female salivary gland (at protein level).

It localises to the secreted. Activates MyD88-dependent canonical NF-kappa-B signaling in host macrophages via interaction with host TLR1 and TLR4; this drives the expression of neutrophil chemoattractants, followed by the subsequent influx of neutrophils and recruitment of myeloid cells at the bite site. Its function is as follows. (Microbial infection) Promotes Zika virus infection in mouse model by facilitating recruitment of flavivirus-permissive myeloid cells at the bite site. Functionally, (Microbial infection) Promotes dengue virus infection in mouse model by facilitating recruitment of flavivirus-permissive myeloid cells at the bite site. In Aedes aegypti (Yellowfever mosquito), this protein is Neutrophil recruitment protein.